Consider the following 219-residue polypeptide: Putative GEM-like protein 8 (219 aa).

One can recognise a GRAM domain in the interval 96–174; that stretch reads KIYKRLFKVS…CKINGVNQSQ (79 aa).

This sequence belongs to the GEM family.

In Arabidopsis thaliana (Mouse-ear cress), this protein is Putative GEM-like protein 8.